The sequence spans 190 residues: CASP-like protein 2U1 (190 aa).

Residues 1-16 (MAFTSLLGSDAERKVA) are Cytoplasmic-facing. A helical membrane pass occupies residues 17-37 (VAEVALRAVLCGLGALAAALV). Residues 38-59 (ATDTQTRTFFSLQKKATYTDMK) are Extracellular-facing. The helical transmembrane segment at 60–80 (AMVLLVAAAAAAAGYSLLQAA) threads the bilayer. The Cytoplasmic segment spans residues 81-100 (RCCCCVALLRTSIRPRARLL). The chain crosses the membrane as a helical span at residues 101–121 (LAWCVFACDQALAYALLAAVV). Residues 122-152 (AALQASVVAKQGLPQLQWMAICALYGAFCRQ) lie on the Extracellular side of the membrane. A helical transmembrane segment spans residues 153–173 (AGAGVACAVAAAVDAALLAFL). Topologically, residues 174-190 (SAFNLFRLYGAKATTTT) are cytoplasmic.

This sequence belongs to the Casparian strip membrane proteins (CASP) family. As to quaternary structure, homodimer and heterodimers.

The protein resides in the cell membrane. This chain is CASP-like protein 2U1, found in Zea mays (Maize).